Here is a 236-residue protein sequence, read N- to C-terminus: 7-cyano-7-deazaguanine synthase (236 aa).

An ATP-binding site is contributed by 7 to 17; it reads CSGGLDSVSLA. Zn(2+) is bound by residues Cys-185, Cys-193, Cys-196, and Cys-199.

The protein belongs to the QueC family. It depends on Zn(2+) as a cofactor.

The catalysed reaction is 7-carboxy-7-deazaguanine + NH4(+) + ATP = 7-cyano-7-deazaguanine + ADP + phosphate + H2O + H(+). Its pathway is purine metabolism; 7-cyano-7-deazaguanine biosynthesis. Its function is as follows. Catalyzes the ATP-dependent conversion of 7-carboxy-7-deazaguanine (CDG) to 7-cyano-7-deazaguanine (preQ(0)). In Sinorhizobium fredii (strain NBRC 101917 / NGR234), this protein is 7-cyano-7-deazaguanine synthase.